The sequence spans 554 residues: Hydroxylamine reductase (554 aa).

Positions 3, 6, 18, and 25 each coordinate [2Fe-2S] cluster. 8 residues coordinate hybrid [4Fe-2O-2S] cluster: His252, Glu276, Cys320, Cys408, Cys436, Cys461, Glu495, and Lys497. Cys408 is subject to Cysteine persulfide.

Belongs to the HCP family. [2Fe-2S] cluster is required as a cofactor. Hybrid [4Fe-2O-2S] cluster serves as cofactor.

The protein resides in the cytoplasm. The enzyme catalyses A + NH4(+) + H2O = hydroxylamine + AH2 + H(+). Functionally, catalyzes the reduction of hydroxylamine to form NH(3) and H(2)O. The chain is Hydroxylamine reductase from Shewanella baltica (strain OS185).